A 160-amino-acid chain; its full sequence is AP-1 complex subunit sigma-2 (160 aa).

The protein belongs to the adaptor complexes small subunit family. In terms of assembly, adaptor protein complex 1 (AP-1) is a heterotetramer composed of two large adaptins (gamma-type subunit AP1G1 and beta-type subunit AP1B1), a medium adaptin (mu-type subunit AP1M1 or AP1M2) and a small adaptin (sigma-type subunit AP1S1 or AP1S2 or AP1S3). Binds to MUC1. As to expression, widely expressed.

The protein localises to the golgi apparatus. The protein resides in the cytoplasmic vesicle membrane. It localises to the membrane. It is found in the clathrin-coated pit. Subunit of clathrin-associated adaptor protein complex 1 that plays a role in protein sorting in the late-Golgi/trans-Golgi network (TGN) and/or endosomes. The AP complexes mediate both the recruitment of clathrin to membranes and the recognition of sorting signals within the cytosolic tails of transmembrane cargo molecules. This chain is AP-1 complex subunit sigma-2 (Ap1s2), found in Mus musculus (Mouse).